A 341-amino-acid chain; its full sequence is Retinol dehydrogenase 10 (341 aa).

Residues 3–23 (IVVEFFVVTFKVLWAFVLAAA) traverse the membrane as a helical; Signal-anchor segment. Position 40–64 (40–64 (LITGAGSGLGRLFALEFARRRALLV)) interacts with NADP(+). Ser-197 serves as a coordination point for substrate. Tyr-210 functions as the Proton acceptor in the catalytic mechanism.

Belongs to the short-chain dehydrogenases/reductases (SDR) family. Detected in retinal pigment epithelium (at protein level). Detected in retina, retinal pigment epithelium, and at lower levels in cornea, liver, kidney, pancreas, lung, brain and skeletal muscle.

The protein localises to the microsome membrane. It localises to the endoplasmic reticulum membrane. It carries out the reaction all-trans-retinol + NADP(+) = all-trans-retinal + NADPH + H(+). The protein operates within cofactor metabolism; retinol metabolism. Functionally, retinol dehydrogenase with a clear preference for NADP. Converts all-trans-retinol to all-trans-retinal. Has no detectable activity towards 11-cis-retinol, 9-cis-retinol and 13-cis-retinol. The protein is Retinol dehydrogenase 10 (RDH10) of Bos taurus (Bovine).